A 349-amino-acid polypeptide reads, in one-letter code: Aspartate carbamoyltransferase catalytic subunit (349 aa).

Positions 59 and 60 each coordinate carbamoyl phosphate. Residue K87 participates in L-aspartate binding. Residues R109, H142, and Q145 each coordinate carbamoyl phosphate. L-aspartate contacts are provided by R182 and R253. The carbamoyl phosphate site is built by G294 and P295.

The protein belongs to the aspartate/ornithine carbamoyltransferase superfamily. ATCase family. In terms of assembly, heterododecamer (2C3:3R2) of six catalytic PyrB chains organized as two trimers (C3), and six regulatory PyrI chains organized as three dimers (R2).

It catalyses the reaction carbamoyl phosphate + L-aspartate = N-carbamoyl-L-aspartate + phosphate + H(+). The protein operates within pyrimidine metabolism; UMP biosynthesis via de novo pathway; (S)-dihydroorotate from bicarbonate: step 2/3. Functionally, catalyzes the condensation of carbamoyl phosphate and aspartate to form carbamoyl aspartate and inorganic phosphate, the committed step in the de novo pyrimidine nucleotide biosynthesis pathway. The chain is Aspartate carbamoyltransferase catalytic subunit from Synechococcus sp. (strain CC9311).